The sequence spans 123 residues: Large ribosomal subunit protein bL17 (123 aa).

This sequence belongs to the bacterial ribosomal protein bL17 family. In terms of assembly, part of the 50S ribosomal subunit. Contacts protein L32.

This Borreliella afzelii (strain PKo) (Borrelia afzelii) protein is Large ribosomal subunit protein bL17.